The sequence spans 261 residues: 5'-nucleotidase SurE (261 aa).

A divalent metal cation contacts are provided by Asp-8, Asp-9, Ser-43, and Asn-96.

Belongs to the SurE nucleotidase family. It depends on a divalent metal cation as a cofactor.

It is found in the cytoplasm. The enzyme catalyses a ribonucleoside 5'-phosphate + H2O = a ribonucleoside + phosphate. In terms of biological role, nucleotidase that shows phosphatase activity on nucleoside 5'-monophosphates. In Cereibacter sphaeroides (strain KD131 / KCTC 12085) (Rhodobacter sphaeroides), this protein is 5'-nucleotidase SurE.